Here is a 156-residue protein sequence, read N- to C-terminus: Small ribosomal subunit protein uS7 (156 aa).

The protein belongs to the universal ribosomal protein uS7 family. As to quaternary structure, part of the 30S ribosomal subunit. Contacts proteins S9 and S11.

Functionally, one of the primary rRNA binding proteins, it binds directly to 16S rRNA where it nucleates assembly of the head domain of the 30S subunit. Is located at the subunit interface close to the decoding center, probably blocks exit of the E-site tRNA. The chain is Small ribosomal subunit protein uS7 from Bordetella petrii (strain ATCC BAA-461 / DSM 12804 / CCUG 43448).